The following is a 222-amino-acid chain: tRNA (guanine-N(1)-)-methyltransferase (222 aa).

S-adenosyl-L-methionine contacts are provided by residues glycine 110 and 130 to 135; that span reads IGDYVL.

It belongs to the RNA methyltransferase TrmD family. In terms of assembly, homodimer.

Its subcellular location is the cytoplasm. It carries out the reaction guanosine(37) in tRNA + S-adenosyl-L-methionine = N(1)-methylguanosine(37) in tRNA + S-adenosyl-L-homocysteine + H(+). Specifically methylates guanosine-37 in various tRNAs. The protein is tRNA (guanine-N(1)-)-methyltransferase of Protochlamydia amoebophila (strain UWE25).